The following is a 308-amino-acid chain: MAKRHVIFVVGSTATGKSEWALKLAQEFNGVIVNCDSVQLYKKLDIGSAKPSKAEQALVPHYLLDYVNPPEEMTAGNYCRDFYAILEEIPADKPVFVVGGTGFYFMAIEKGMYPVIPVPVEIQAQVALELETEEGAIRLHAEMMKADPEYGAKIHLADRYRIGRAIELIRSQGKSVTQIQAEFESQRKPFPFPLLKIGPSWDREVLRERIGQRVEKMLAAGLIEEVQGLLDEGLASWAPISSVGYKETLEYLRGGISLSQLQEEITTNTHQLAKRQRTWFQRDKDIQWFDGASGFAEVRTVVEKFLKP.

Residue 11–18 (GSTATGKS) coordinates ATP. 13-18 (TATGKS) lines the substrate pocket. The tract at residues 36–39 (DSVQ) is interaction with substrate tRNA.

Belongs to the IPP transferase family. In terms of assembly, monomer. Mg(2+) is required as a cofactor.

The enzyme catalyses adenosine(37) in tRNA + dimethylallyl diphosphate = N(6)-dimethylallyladenosine(37) in tRNA + diphosphate. Catalyzes the transfer of a dimethylallyl group onto the adenine at position 37 in tRNAs that read codons beginning with uridine, leading to the formation of N6-(dimethylallyl)adenosine (i(6)A). This Bdellovibrio bacteriovorus (strain ATCC 15356 / DSM 50701 / NCIMB 9529 / HD100) protein is tRNA dimethylallyltransferase.